We begin with the raw amino-acid sequence, 367 residues long: Pectate lyase 1 (367 aa).

The signal sequence occupies residues 1–21 (MASPCLVAVLVFLCAIVSCYS). Cystine bridges form between Cys28/Cys45 and Cys128/Cys147. Asn148 is a glycosylation site (N-linked (GlcNAc...) asparagine). Ca(2+) is bound at residue Asp170. Asn178 is a glycosylation site (N-linked (GlcNAc...) asparagine). Positions 194 and 198 each coordinate Ca(2+). The active site involves Arg250. A glycan (N-linked (GlcNAc...) asparagine) is linked at Asn293. Cys306 and Cys312 form a disulfide bridge.

Belongs to the polysaccharide lyase 1 family. Amb a subfamily. Ca(2+) serves as cofactor.

It carries out the reaction Eliminative cleavage of (1-&gt;4)-alpha-D-galacturonan to give oligosaccharides with 4-deoxy-alpha-D-galact-4-enuronosyl groups at their non-reducing ends.. It functions in the pathway glycan metabolism; pectin degradation; 2-dehydro-3-deoxy-D-gluconate from pectin: step 2/5. Its function is as follows. Has pectate lyase activity. The chain is Pectate lyase 1 from Hesperocyparis arizonica (Arizona cypress).